The chain runs to 634 residues: Poly(ribitol-phosphate) beta-glucosyltransferase (634 aa).

The protein belongs to the glycosyltransferase 2 family.

It carries out the reaction 4-O-[(D-ribitylphospho)(n)-D-ribitylphospho-(2R)-glycerylphospho]-N-acetyl-beta-D-mannosaminyl-(1-&gt;4)-N-acetyl-alpha-D-glucosaminyl di-trans,octa-cis-undecaprenyl diphosphate + n UDP-alpha-D-glucose = 4-O-[(2-beta-D-glucosyl-D-ribitylphospho)(n)-D-ribitylphospho-(2R)-glycerylphospho]-N-acetyl-beta-D-mannosaminyl-(1-&gt;4)-N-acetyl-alpha-D-glucosaminyl di-trans,octa-cis-undecaprenyl diphosphate + n UDP + n H(+). The protein operates within cell wall biogenesis; poly(ribitol phosphate) teichoic acid biosynthesis. In terms of biological role, attaches glucose residues to poly(RboP)-wall teichoic acids (WTAs). This Bacillus spizizenii (strain ATCC 23059 / NRRL B-14472 / W23) (Bacillus subtilis subsp. spizizenii) protein is Poly(ribitol-phosphate) beta-glucosyltransferase.